A 305-amino-acid chain; its full sequence is UDP-3-O-acyl-N-acetylglucosamine deacetylase (305 aa).

Positions 78, 237, and 241 each coordinate Zn(2+). Histidine 264 (proton donor) is an active-site residue.

The protein belongs to the LpxC family. Zn(2+) serves as cofactor.

The catalysed reaction is a UDP-3-O-[(3R)-3-hydroxyacyl]-N-acetyl-alpha-D-glucosamine + H2O = a UDP-3-O-[(3R)-3-hydroxyacyl]-alpha-D-glucosamine + acetate. Its pathway is glycolipid biosynthesis; lipid IV(A) biosynthesis; lipid IV(A) from (3R)-3-hydroxytetradecanoyl-[acyl-carrier-protein] and UDP-N-acetyl-alpha-D-glucosamine: step 2/6. Its function is as follows. Catalyzes the hydrolysis of UDP-3-O-myristoyl-N-acetylglucosamine to form UDP-3-O-myristoylglucosamine and acetate, the committed step in lipid A biosynthesis. In Ralstonia pickettii (strain 12J), this protein is UDP-3-O-acyl-N-acetylglucosamine deacetylase.